A 493-amino-acid chain; its full sequence is tRNA (uracil-5-)-methyltransferase homolog B (493 aa).

The N-terminal 14 residues, 1–14, are a transit peptide targeting the mitochondrion; the sequence is MHNPRLFLSRAGFF. The S-adenosyl-L-methionine site is built by Gln-312, Glu-362, and Asn-412. The Nucleophile role is filled by Cys-440. Catalysis depends on Glu-486, which acts as the Proton acceptor.

The protein belongs to the class I-like SAM-binding methyltransferase superfamily. RNA M5U methyltransferase family.

Its subcellular location is the mitochondrion matrix. The enzyme catalyses uridine(54) in tRNA + S-adenosyl-L-methionine = 5-methyluridine(54) in tRNA + S-adenosyl-L-homocysteine + H(+). The catalysed reaction is a uridine in 12S rRNA + S-adenosyl-L-methionine = a 5-methyluridine in 12S rRNA + S-adenosyl-L-homocysteine + H(+). In terms of biological role, mitochondrial S-adenosyl-L-methionine-dependent methyltransferase that catalyzes the formation of 5-methyl-uridine in tRNAs and 12S rRNA. Catalyzes the methylation of uridine at position 54 (m5U54) in all tRNAs. Specifically methylates the uridine in position 425 of 12S rRNA (m5U425). Does not affect RNA stability or mitochondrial translation. This chain is tRNA (uracil-5-)-methyltransferase homolog B, found in Mus musculus (Mouse).